Consider the following 161-residue polypeptide: Ribonuclease H (161 aa).

The RNase H type-1 domain occupies 5 to 149 (EKLAIAAATD…VDAIAVAFSK (145 aa)). The Mg(2+) site is built by Asp14, Glu53, Asp78, and Asp141.

It belongs to the RNase H family. Monomer. It depends on Mg(2+) as a cofactor.

Its subcellular location is the cytoplasm. It carries out the reaction Endonucleolytic cleavage to 5'-phosphomonoester.. Functionally, endonuclease that specifically degrades the RNA of RNA-DNA hybrids. The protein is Ribonuclease H of Prochlorococcus marinus (strain NATL1A).